A 259-amino-acid chain; its full sequence is Imidazole glycerol phosphate synthase subunit HisF (259 aa).

Active-site residues include Asp11 and Asp130.

It belongs to the HisA/HisF family. In terms of assembly, heterodimer of HisH and HisF.

The protein localises to the cytoplasm. It carries out the reaction 5-[(5-phospho-1-deoxy-D-ribulos-1-ylimino)methylamino]-1-(5-phospho-beta-D-ribosyl)imidazole-4-carboxamide + L-glutamine = D-erythro-1-(imidazol-4-yl)glycerol 3-phosphate + 5-amino-1-(5-phospho-beta-D-ribosyl)imidazole-4-carboxamide + L-glutamate + H(+). The protein operates within amino-acid biosynthesis; L-histidine biosynthesis; L-histidine from 5-phospho-alpha-D-ribose 1-diphosphate: step 5/9. Its function is as follows. IGPS catalyzes the conversion of PRFAR and glutamine to IGP, AICAR and glutamate. The HisF subunit catalyzes the cyclization activity that produces IGP and AICAR from PRFAR using the ammonia provided by the HisH subunit. The chain is Imidazole glycerol phosphate synthase subunit HisF from Syntrophobacter fumaroxidans (strain DSM 10017 / MPOB).